Reading from the N-terminus, the 312-residue chain is Small ribosomal subunit protein uS2 (312 aa).

Belongs to the universal ribosomal protein uS2 family.

The polypeptide is Small ribosomal subunit protein uS2 (Ruthia magnifica subsp. Calyptogena magnifica).